The sequence spans 316 residues: Ribosomal RNA small subunit methyltransferase H (316 aa).

S-adenosyl-L-methionine contacts are provided by residues Gly-42 to His-44, Asp-62, Phe-86, Asp-104, and Gln-111.

Belongs to the methyltransferase superfamily. RsmH family.

The protein localises to the cytoplasm. It carries out the reaction cytidine(1402) in 16S rRNA + S-adenosyl-L-methionine = N(4)-methylcytidine(1402) in 16S rRNA + S-adenosyl-L-homocysteine + H(+). Its function is as follows. Specifically methylates the N4 position of cytidine in position 1402 (C1402) of 16S rRNA. This chain is Ribosomal RNA small subunit methyltransferase H, found in Polynucleobacter asymbioticus (strain DSM 18221 / CIP 109841 / QLW-P1DMWA-1) (Polynucleobacter necessarius subsp. asymbioticus).